The following is a 539-amino-acid chain: Tripartite motif-containing protein 26 (539 aa).

The segment at 16–57 (CSICLDYLRDPVTIDCGHVFCRSCTTDVRPISGSRPVCPLCK) adopts an RING-type zinc-finger fold. The B box-type zinc finger occupies 97-138 (QDAKLCERHREKLHYYCEDDGKLLCVMCRESREHRPHTAVLM). The Zn(2+) site is built by Cys102, His105, Cys124, and His130. Residues 188-227 (IVAEFEQGHQFLREREEHLLEQLAKLEQELTEGREKFKSR) are a coiled coil. In terms of domain architecture, B30.2/SPRY spans 295–539 (RGLREFQGKL…WPGTRLLLRP (245 aa)). Residues 376–437 (REGWSEDEEE…EEEEEVLESC (62 aa)) are disordered. The span at 380-434 (SEDEEEGDEEEEGEEEEEEEEAGYGDGYDDWETDEDEESLGDEEEEEEEEEEEVL) shows a compositional bias: acidic residues.

Belongs to the TRIM/RBCC family. As to quaternary structure, interacts with TBK1; this interaction bridges together TBK1 and NEMO in order to activate TBK1. Interacts with INCA1. Post-translationally, autoubiquitinates upon viral infection. In turn, autoubiquitinated TRIM26 recruits NEMO and bridges TBK1-NEMO interaction.

Its subcellular location is the cytoplasm. It is found in the nucleus. It catalyses the reaction S-ubiquitinyl-[E2 ubiquitin-conjugating enzyme]-L-cysteine + [acceptor protein]-L-lysine = [E2 ubiquitin-conjugating enzyme]-L-cysteine + N(6)-ubiquitinyl-[acceptor protein]-L-lysine.. E3 ubiquitin-protein ligase which regulates the IFN-beta production and antiviral response downstream of various DNA-encoded pattern-recognition receptors (PRRs). Also plays a central role in determining the response to different forms of oxidative stress by controlling levels of DNA glycosylases NEIL1, NEIL3 and NTH1 that are involved in repair of damaged DNA. Promotes nuclear IRF3 ubiquitination and proteasomal degradation. Bridges together TBK1 and NEMO during the innate response to viral infection leading to the activation of TBK1. Positively regulates LPS-mediated inflammatory innate immune response by catalyzing the 'Lys-11'-linked polyubiquitination of TAB1 to enhance its activation and subsequent NF-kappa-B and MAPK signaling. In a manner independent of its catalytic activity, inhibits WWP2, a SOX2-directed E3 ubiquitin ligase, and thus protects SOX2 from polyubiquitination and proteasomal degradation. Ubiquitinates the histone acetyltransferase protein complex component PHF20 and thereby triggers its degradation in the nucleus after its recruitment by the histone demethylase KDM6B, serving as a scaffold protein. Upon induction by TGF-beta, ubiquitinates the TFIID component TAF7 for proteasomal degradation. Induces ferroptosis by ubiquitinating SLC7A11, a critical protein for lipid reactive oxygen species (ROS) scavenging. Inhibits directly hepatitis B virus replication by mediating HBX ubiquitination and subsequent degradation. Its function is as follows. (Microbial infection) Promotes herpes simplex virus type 2/HHV-2 infection in vaginal epithelial cells by decreasing the nuclear localization of IRF3, the primary mediator of type I interferon activation. The polypeptide is Tripartite motif-containing protein 26 (TRIM26) (Homo sapiens (Human)).